We begin with the raw amino-acid sequence, 157 residues long: Type II restriction enzyme PvuII (157 aa).

Residues Asp-58 and Glu-68 each contribute to the Mg(2+) site.

In terms of assembly, homodimer. Mg(2+) is required as a cofactor.

The catalysed reaction is Endonucleolytic cleavage of DNA to give specific double-stranded fragments with terminal 5'-phosphates.. A P subtype restriction enzyme that recognizes the double-stranded sequence 5'-CAGCTG-3' and cleaves after G-3. This Proteus hauseri protein is Type II restriction enzyme PvuII (pvuIIR).